Consider the following 819-residue polypeptide: Myosin light chain kinase 3 (819 aa).

3 disordered regions span residues 146–256 (VPWR…TPSE), 273–334 (VVSP…TPPR), and 347–462 (EMLM…EQDC). The residue at position 152 (serine 152) is a Phosphoserine. Basic and acidic residues-rich tracts occupy residues 158–170 (EENK…EGGK) and 183–196 (DARE…KADV). A compositionally biased stretch (pro residues) spans 307–318 (GPGPQCPGPPGL). Phosphoserine occurs at positions 355, 401, and 408. The Protein kinase domain maps to 515-770 (VCQHEVLGGG…ATQCLKHEWL (256 aa)). ATP-binding positions include 521–529 (LGGGRFGQV) and lysine 544. Aspartate 636 serves as the catalytic Proton acceptor.

The protein belongs to the protein kinase superfamily. CAMK Ser/Thr protein kinase family. Mg(2+) serves as cofactor. Post-translationally, phosphorylated on serine residues. As to expression, restricted to heart.

It localises to the cytoplasm. It carries out the reaction L-seryl-[myosin light chain] + ATP = O-phospho-L-seryl-[myosin light chain] + ADP + H(+). The catalysed reaction is L-threonyl-[myosin light chain] + ATP = O-phospho-L-threonyl-[myosin light chain] + ADP + H(+). Functionally, kinase that phosphorylates MYL2 in vitro. Promotes sarcomere formation in cardiomyocytes and increases cardiomyocyte contractility. This Homo sapiens (Human) protein is Myosin light chain kinase 3 (MYLK3).